Here is a 132-residue protein sequence, read N- to C-terminus: Small ribosomal subunit protein uS8 (132 aa).

It belongs to the universal ribosomal protein uS8 family. In terms of assembly, part of the 30S ribosomal subunit. Contacts proteins S5 and S12.

One of the primary rRNA binding proteins, it binds directly to 16S rRNA central domain where it helps coordinate assembly of the platform of the 30S subunit. In Xylella fastidiosa (strain M12), this protein is Small ribosomal subunit protein uS8.